Here is a 295-residue protein sequence, read N- to C-terminus: 4-hydroxy-tetrahydrodipicolinate synthase (295 aa).

Residue T46 participates in pyruvate binding. The active-site Proton donor/acceptor is Y134. Catalysis depends on K162, which acts as the Schiff-base intermediate with substrate. V204 serves as a coordination point for pyruvate.

Belongs to the DapA family. Homotetramer; dimer of dimers.

The protein resides in the cytoplasm. The enzyme catalyses L-aspartate 4-semialdehyde + pyruvate = (2S,4S)-4-hydroxy-2,3,4,5-tetrahydrodipicolinate + H2O + H(+). Its pathway is amino-acid biosynthesis; L-lysine biosynthesis via DAP pathway; (S)-tetrahydrodipicolinate from L-aspartate: step 3/4. Its function is as follows. Catalyzes the condensation of (S)-aspartate-beta-semialdehyde [(S)-ASA] and pyruvate to 4-hydroxy-tetrahydrodipicolinate (HTPA). In Oceanobacillus iheyensis (strain DSM 14371 / CIP 107618 / JCM 11309 / KCTC 3954 / HTE831), this protein is 4-hydroxy-tetrahydrodipicolinate synthase.